The primary structure comprises 146 residues: Deoxyuridine 5'-triphosphate nucleotidohydrolase (146 aa).

Residues 66–68 (RSG), N79, and 83–85 (TID) each bind substrate.

Belongs to the dUTPase family. Mg(2+) serves as cofactor.

It catalyses the reaction dUTP + H2O = dUMP + diphosphate + H(+). It participates in pyrimidine metabolism; dUMP biosynthesis; dUMP from dCTP (dUTP route): step 2/2. In terms of biological role, this enzyme is involved in nucleotide metabolism: it produces dUMP, the immediate precursor of thymidine nucleotides and it decreases the intracellular concentration of dUTP so that uracil cannot be incorporated into DNA. The chain is Deoxyuridine 5'-triphosphate nucleotidohydrolase from Citrifermentans bemidjiense (strain ATCC BAA-1014 / DSM 16622 / JCM 12645 / Bem) (Geobacter bemidjiensis).